The primary structure comprises 42 residues: Putative protein RNF216-like (42 aa).

The sequence is that of Putative protein RNF216-like (RNF216P1) from Homo sapiens (Human).